The primary structure comprises 298 residues: Estradiol 17-beta-dehydrogenase 11 (298 aa).

The first 21 residues, 1–21 (MKYLLDLILLLPLLIVFSIES), serve as a signal peptide directing secretion. Residue 40 to 64 (LITGAGHGIGRLTAYEFAKLNTKLV) coordinates NADP(+). S172 provides a ligand contact to substrate. The active-site Proton acceptor is the Y185.

The protein belongs to the short-chain dehydrogenases/reductases (SDR) family. 17-beta-HSD 3 subfamily. In terms of tissue distribution, expressed in the liver (at protein level). Also expressed in the intestine and, at much lower levels, in the kidney.

The protein localises to the endoplasmic reticulum. It localises to the lipid droplet. It carries out the reaction 17beta-estradiol + NAD(+) = estrone + NADH + H(+). The enzyme catalyses 17beta-estradiol + NADP(+) = estrone + NADPH + H(+). Functionally, can convert androstan-3-alpha,17-beta-diol (3-alpha-diol) to androsterone in vitro, suggesting that it may participate in androgen metabolism during steroidogenesis. May act by metabolizing compounds that stimulate steroid synthesis and/or by generating metabolites that inhibit it. Has no activity toward DHEA (dehydroepiandrosterone), or A-dione (4-androste-3,17-dione), and only a slight activity toward testosterone to A-dione. The protein is Estradiol 17-beta-dehydrogenase 11 (Hsd17b11) of Mus musculus (Mouse).